The following is a 177-amino-acid chain: Ribosome maturation factor RimP (177 aa).

Over residues Val-153–Lys-171 the composition is skewed to basic and acidic residues. The tract at residues Val-153–Ala-177 is disordered.

Belongs to the RimP family.

It is found in the cytoplasm. In terms of biological role, required for maturation of 30S ribosomal subunits. In Streptomyces coelicolor (strain ATCC BAA-471 / A3(2) / M145), this protein is Ribosome maturation factor RimP.